We begin with the raw amino-acid sequence, 561 residues long: Dihydroxy-acid dehydratase (561 aa).

Residue C50 coordinates [2Fe-2S] cluster. Residue D82 coordinates Mg(2+). Position 123 (C123) interacts with [2Fe-2S] cluster. D124 and K125 together coordinate Mg(2+). K125 bears the N6-carboxylysine mark. C195 is a [2Fe-2S] cluster binding site. E447 contributes to the Mg(2+) binding site. Catalysis depends on S473, which acts as the Proton acceptor.

It belongs to the IlvD/Edd family. Homodimer. It depends on [2Fe-2S] cluster as a cofactor. The cofactor is Mg(2+).

It carries out the reaction (2R)-2,3-dihydroxy-3-methylbutanoate = 3-methyl-2-oxobutanoate + H2O. It catalyses the reaction (2R,3R)-2,3-dihydroxy-3-methylpentanoate = (S)-3-methyl-2-oxopentanoate + H2O. It participates in amino-acid biosynthesis; L-isoleucine biosynthesis; L-isoleucine from 2-oxobutanoate: step 3/4. Its pathway is amino-acid biosynthesis; L-valine biosynthesis; L-valine from pyruvate: step 3/4. In terms of biological role, functions in the biosynthesis of branched-chain amino acids. Catalyzes the dehydration of (2R,3R)-2,3-dihydroxy-3-methylpentanoate (2,3-dihydroxy-3-methylvalerate) into 2-oxo-3-methylpentanoate (2-oxo-3-methylvalerate) and of (2R)-2,3-dihydroxy-3-methylbutanoate (2,3-dihydroxyisovalerate) into 2-oxo-3-methylbutanoate (2-oxoisovalerate), the penultimate precursor to L-isoleucine and L-valine, respectively. The chain is Dihydroxy-acid dehydratase from Synechocystis sp. (strain ATCC 27184 / PCC 6803 / Kazusa).